Reading from the N-terminus, the 362-residue chain is Tyrosyl-DNA phosphodiesterase 2 (362 aa).

Methionine 1 is subject to N-acetylmethionine. The segment at 1 to 20 is disordered; the sequence is MELGSCLEGGREAAEEEGEP. Residues lysine 23 and lysine 82 each participate in a glycyl lysine isopeptide (Lys-Gly) (interchain with G-Cter in SUMO2) cross-link. The tract at residues 87–109 is disordered; that stretch reads LTNEETTDSTTSKISPSEDTQQE. 2 positions are modified to phosphothreonine; by ACVR1B: threonine 88 and threonine 92. Positions 94 to 109 are enriched in polar residues; the sequence is DSTTSKISPSEDTQQE. Serine 95 carries the post-translational modification Phosphoserine. The tract at residues 120–124 is interaction with 5' end of substrate DNA; the sequence is NIDGL. Mg(2+)-binding residues include aspartate 122 and glutamate 152. The segment at 226–231 is interaction with 5' end of substrate DNA; the sequence is HLESTR. Aspartate 262 (proton donor/acceptor) is an active-site residue. Residues 264-266 are interaction with 5' end of substrate DNA; sequence NLR.

It belongs to the CCR4/nocturin family. As to quaternary structure, interacts with TRAF2, TRAF3, TRAF5, TRAF6, TNFRSF8/CD30, TNFRSF5/CD40, TNFRSF1B/TNF-R75, ETS1, ETS2, FLI1, SMAD3 and ACVR1B/ALK4. In terms of assembly, (Microbial infection) Interacts with Hantaan hantavirus nucleoprotein. (Microbial infection) Interacts with Seoul hantavirus nucleoprotein. The cofactor is Mg(2+). Mn(2+) serves as cofactor. Ubiquitinated by TRAF6. Widely expressed. Highly expressed in various brain regions, including the frontal and occipital lobes, the hippocampus, the striatum and the cerebellum.

It localises to the nucleus. The protein localises to the PML body. The protein resides in the nucleolus. Its subcellular location is the cytoplasm. In terms of biological role, DNA repair enzyme that can remove a variety of covalent adducts from DNA through hydrolysis of a 5'-phosphodiester bond, giving rise to DNA with a free 5' phosphate. Catalyzes the hydrolysis of dead-end complexes between DNA and the topoisomerase 2 (TOP2) active site tyrosine residue. The 5'-tyrosyl DNA phosphodiesterase activity can enable the repair of TOP2-induced DNA double-strand breaks/DSBs without the need for nuclease activity, creating a 'clean' DSB with 5'-phosphate termini that are ready for ligation. Thereby, protects the transcription of many genes involved in neurological development and maintenance from the abortive activity of TOP2. Hydrolyzes 5'-phosphoglycolates on protruding 5' ends on DSBs due to DNA damage by radiation and free radicals. Has preference for single-stranded DNA or duplex DNA with a 4 base pair overhang as substrate. Acts as a regulator of ribosome biogenesis following stress. Also has 3'-tyrosyl DNA phosphodiesterase activity, but less efficiently and much slower than TDP1. Constitutes the major if not only 5'-tyrosyl-DNA phosphodiesterase in cells. Also acts as an adapter by participating in the specific activation of MAP3K7/TAK1 in response to TGF-beta: associates with components of the TGF-beta receptor-TRAF6-TAK1 signaling module and promotes their ubiquitination dependent complex formation. Involved in non-canonical TGF-beta induced signaling routes. May also act as a negative regulator of ETS1 and may inhibit NF-kappa-B activation. Functionally, (Microbial infection) Used by picornaviruses to remove the small polypeptide, VPg (virus Protein genome-linked, the primer for viral RNA synthesis), from the genomic RNA of the virus. Acts as a 5'-tyrosyl RNA phosphodiesterase and cleaves the covalent VPg-Tyr-RNA bond. This cleavage would play a role in viral replication and occur in viral replication vesicles, but would not act on viral mRNA. The sequence is that of Tyrosyl-DNA phosphodiesterase 2 from Homo sapiens (Human).